A 163-amino-acid chain; its full sequence is Biotin carboxyl carrier protein of acetyl-CoA carboxylase (163 aa).

In terms of domain architecture, Biotinyl-binding spans 85-161 (GDFIVSPLVG…QFGSKLFRIV (77 aa)). Lys-127 is subject to N6-biotinyllysine.

In terms of assembly, homodimer.

Its pathway is lipid metabolism; fatty acid biosynthesis. Its function is as follows. This protein is a component of the acetyl coenzyme A carboxylase complex; first, biotin carboxylase catalyzes the carboxylation of the carrier protein and then the transcarboxylase transfers the carboxyl group to form malonyl-CoA. The sequence is that of Biotin carboxyl carrier protein of acetyl-CoA carboxylase (accB) from Chlamydia muridarum (strain MoPn / Nigg).